Here is a 578-residue protein sequence, read N- to C-terminus: MGNAIREKTIHGIAASSGIAIAKAYRLETPDLAAEKRAVADVEAEVARFEAAVAKAKEELEAIKQHALEKLGEDKAAIFAAHLLVLDDPELLNPIKEKIQTERVNAEYSLDETASFFISMFEAMDNEYMKERAADIRDVTKRVLAHLLGVTISNPSLISEEVVIIAEDLTPSDTAQLNRQYVKGFATDIGGRTSHSAIMARSLEIPAVVGTKTVTAEVKNGDIVIVDGLDGQVIINPSPELLAQYEQKRARYEAQKAEWAKLVHEATVTADGIHVELAANIGTPDDVKGALANGAEGIGLYRTEFLYMGRSELPTEDEQFVAYKTVLEQMNGKPVVVRTLDIGGDKELPYLQLPKEMNPFLGFRAIRLCLEMQDMFRTQLRALLRASVYGNLKIMFPMIATLDEFRQAKAILLEEKEALLRQGVAVADGIEVGMMVEIPAAAVMADQFAKEVDFFSIGTNDLIQYTMAADRMNERVAYLYQPYNPAILRLISHVIDAAHREGKWVGMCGEMAGDPIAIPILLALGLDEFSMSATSILPARAQLKQLAKEEAARIKETVLSLGTAEEVVSFVKRTFSLA.

Catalysis depends on His-195, which acts as the Tele-phosphohistidine intermediate. Phosphoenolpyruvate-binding residues include Arg-302 and Arg-338. 2 residues coordinate Mg(2+): Glu-437 and Asp-461. Residues 460-461 and Arg-471 contribute to the phosphoenolpyruvate site; that span reads ND. Cys-508 (proton donor) is an active-site residue.

It belongs to the PEP-utilizing enzyme family. As to quaternary structure, homodimer. It depends on Mg(2+) as a cofactor.

Its subcellular location is the cytoplasm. It catalyses the reaction L-histidyl-[protein] + phosphoenolpyruvate = N(pros)-phospho-L-histidyl-[protein] + pyruvate. Functionally, general (non sugar-specific) component of the phosphoenolpyruvate-dependent sugar phosphotransferase system (sugar PTS). This major carbohydrate active-transport system catalyzes the phosphorylation of incoming sugar substrates concomitantly with their translocation across the cell membrane. Enzyme I transfers the phosphoryl group from phosphoenolpyruvate (PEP) to the phosphoryl carrier protein (HPr). In Bacillus sp. (strain S), this protein is Phosphoenolpyruvate-protein phosphotransferase (ptsI).